Here is a 102-residue protein sequence, read N- to C-terminus: Heat shock protein HspQ (102 aa).

The protein belongs to the HspQ family.

It is found in the cytoplasm. Involved in the degradation of certain denaturated proteins, including DnaA, during heat shock stress. This chain is Heat shock protein HspQ, found in Pectobacterium atrosepticum (strain SCRI 1043 / ATCC BAA-672) (Erwinia carotovora subsp. atroseptica).